We begin with the raw amino-acid sequence, 272 residues long: Lectin-like protein At1g53070 (272 aa).

The N-terminal stretch at 1-23 is a signal peptide; that stretch reads MKIQILCFTTLFLAIFTSQVTTA. The segment at 24–271 is legume-lectin like; sequence YKFKFDYFGN…RHEIWDWTFQ (248 aa). N-linked (GlcNAc...) asparagine glycans are attached at residues N33, N84, and N134. Residue S241 is modified to Phosphoserine.

Belongs to the leguminous lectin family.

The protein resides in the secreted. Its subcellular location is the extracellular space. The protein localises to the apoplast. The protein is Lectin-like protein At1g53070 of Arabidopsis thaliana (Mouse-ear cress).